Reading from the N-terminus, the 319-residue chain is Large ribosomal subunit protein eL8 (319 aa).

Residue lysine 87 is modified to N6-acetyllysine. Lysine 101 participates in a covalent cross-link: Glycyl lysine isopeptide (Lys-Gly) (interchain with G-Cter in SUMO2). Residue lysine 150 is modified to N6-acetyllysine; alternate. Lysine 150 is covalently cross-linked (Glycyl lysine isopeptide (Lys-Gly) (interchain with G-Cter in SUMO2); alternate). Residue lysine 178 forms a Glycyl lysine isopeptide (Lys-Gly) (interchain with G-Cter in SUMO2) linkage. The residue at position 270 (lysine 270) is an N6-acetyllysine. Lysine 298 is covalently cross-linked (Glycyl lysine isopeptide (Lys-Gly) (interchain with G-Cter in SUMO2)).

The protein belongs to the eukaryotic ribosomal protein eL8 family. Component of the large ribosomal subunit. Interacts with CRY1. Interacts with DICER1, AGO2, TARBP2, MOV10 and EIF6; they form a large RNA-induced silencing complex (RISC).

It localises to the cytoplasm. Its function is as follows. Component of the large ribosomal subunit. The ribosome is a large ribonucleoprotein complex responsible for the synthesis of proteins in the cell. The protein is Large ribosomal subunit protein eL8 (RPL7A) of Oryctolagus cuniculus (Rabbit).